Consider the following 313-residue polypeptide: Lactamase-like protein nscB (313 aa).

The Zn(2+) site is built by His97, His99, Asp101, and His102. Asp101 acts as the Proton donor/acceptor in catalysis.

It belongs to the metallo-beta-lactamase superfamily. Zn(2+) is required as a cofactor.

It participates in secondary metabolite biosynthesis. Its function is as follows. Lactamase-like protein; part of the gene cluster that mediates the biosynthesis of neosartoricin B, a prenylated anthracenone that probably exhibits T-cell antiproliferative activity, suggestive of a physiological role as an immunosuppressive agent. The non-reducing polyketide synthase nscA probably synthesizes and cyclizes the decaketide backbone. The hydrolase nscB then mediates the product release through hydrolysis followed by spontaneous decarboxylation. The prenyltransferase nscD catalyzes the addition of the dimethylallyl group to the aromatic C5. The FAD-dependent monooxygenase nscC is then responsible for the stereospecific hydroxylation at C2. Neosartoricin B can be converted into two additional compounds neosartoricins C and D. Neosartoricin C is a spirocyclic compound that is cyclized through the attack of C3 hydroxyl on C14, followed by dehydration. On the other hand, neosartoricin D is a further cyclized compound in which attack of C2 on C14 in neosartoricin C results in the formation of the acetal-containing dioxabicyclo-octanone ring. Both of these compounds are novel and possibly represent related metabolites of the gene cluster. This chain is Lactamase-like protein nscB, found in Arthroderma gypseum (strain ATCC MYA-4604 / CBS 118893) (Microsporum gypseum).